We begin with the raw amino-acid sequence, 481 residues long: Multiple inositol polyphosphate phosphatase 1 (481 aa).

The N-terminal stretch at 1-30 is a signal peptide; that stretch reads MLRGARSHLPASVAPAAVLAAALLSSFARC. Histidine 89 is an active-site residue. 2 N-linked (GlcNAc...) asparagine glycosylation sites follow: asparagine 236 and asparagine 475. The short motif at 478 to 481 is the Prevents secretion from ER element; the sequence is SDEL.

This sequence belongs to the histidine acid phosphatase family. MINPP1 subfamily. In terms of processing, N-glycosylated. Widely expressed with highest levels in kidney, intestine, thymus and liver.

Its subcellular location is the endoplasmic reticulum lumen. It is found in the secreted. The protein resides in the cell membrane. The catalysed reaction is 1D-myo-inositol hexakisphosphate + H2O = 1D-myo-inositol 1,2,4,5,6-pentakisphosphate + phosphate. It carries out the reaction 1D-myo-inositol 1,2,4,5,6-pentakisphosphate + H2O = 1D-myo-inositol 1,2,5,6-tetrakisphosphate + phosphate. The enzyme catalyses 1D-myo-inositol 1,2,5,6-tetrakisphosphate + H2O = 1D-myo-inositol 1,2,6-trisphosphate + phosphate. It catalyses the reaction 1D-myo-inositol 1,2,6-trisphosphate + H2O = 1D-myo-inositol 1,2-bisphosphate + phosphate. The catalysed reaction is 1D-myo-inositol 1,2-bisphosphate + H2O = 1D-myo-inositol 2-phosphate + phosphate. It carries out the reaction 1D-myo-inositol hexakisphosphate + H2O = 1D-myo-inositol 1,2,3,5,6-pentakisphosphate + phosphate. The enzyme catalyses 1D-myo-inositol 1,2,3,5,6-pentakisphosphate + H2O = 1D-myo-inositol 1,2,3,6-tetrakisphosphate + phosphate. It catalyses the reaction 1D-myo-inositol 1,2,3,6-tetrakisphosphate + H2O = 1D-myo-inositol 1,2,3-trisphosphate + phosphate. The catalysed reaction is 1D-myo-inositol 1,2,3-trisphosphate + H2O = 1D-myo-inositol 2,3-bisphosphate + phosphate. It carries out the reaction 1D-myo-inositol 2,3-bisphosphate + H2O = 1D-myo-inositol 2-phosphate + phosphate. The enzyme catalyses 1D-myo-inositol 1,3,4,5,6-pentakisphosphate + H2O = 1D-myo-inositol 1,4,5,6-tetrakisphosphate + phosphate. It catalyses the reaction 1D-myo-inositol 1,4,5,6-tetrakisphosphate + H2O = 1D-myo-inositol 1,4,5-trisphosphate + phosphate. The catalysed reaction is (2R)-2,3-bisphosphoglycerate + H2O = (2R)-2-phosphoglycerate + phosphate. Its function is as follows. Multiple inositol polyphosphate phosphatase that hydrolyzes 1D-myo-inositol 1,3,4,5,6-pentakisphosphate (InsP5[2OH]) and 1D-myo-inositol hexakisphosphate (InsP6) to a range of less phosphorylated inositol phosphates. This regulates the availability of these various small molecule second messengers and metal chelators which control many aspects of cell physiology. Has a weak in vitro activity towards 1D-myo-inositol 1,4,5-trisphosphate which is unlikely to be physiologically relevant. By regulating intracellular inositol polyphosphates pools, which act as metal chelators, it may control the availability of intracellular calcium and iron, which are important for proper neuronal development and homeostasis. May have a dual substrate specificity, and function as a 2,3-bisphosphoglycerate 3-phosphatase hydrolyzing 2,3-bisphosphoglycerate to 2-phosphoglycerate. 2,3-bisphosphoglycerate (BPG) is formed as part of the Rapoport-Luebering glycolytic bypass and is a regulator of systemic oxygen homeostasis as the major allosteric effector of hemoglobin. This Mus musculus (Mouse) protein is Multiple inositol polyphosphate phosphatase 1.